Consider the following 54-residue polypeptide: Chymosin (54 aa).

Positions 1-27 (SEITRVPLHKGKSLRKALKEHGLLEBF) are cleaved as a propeptide — activation peptide.

Belongs to the peptidase A1 family. Monomer.

The catalysed reaction is Broad specificity similar to that of pepsin A. Clots milk by cleavage of a single 104-Ser-Phe-|-Met-Ala-107 bond in kappa-chain of casein.. Its function is as follows. Chymosin is synthesized in the mucosa of the stomach. The enzyme hydrolyzes casein to paracasein. The polypeptide is Chymosin (CYM) (Felis catus (Cat)).